Here is a 555-residue protein sequence, read N- to C-terminus: Glutamate--tRNA ligase (555 aa).

The short motif at 100 to 110 (PNPSGPLHIGH) is the 'HIGH' region element.

Belongs to the class-I aminoacyl-tRNA synthetase family. Glutamate--tRNA ligase type 2 subfamily.

It localises to the cytoplasm. It catalyses the reaction tRNA(Glu) + L-glutamate + ATP = L-glutamyl-tRNA(Glu) + AMP + diphosphate. In terms of biological role, catalyzes the attachment of glutamate to tRNA(Glu) in a two-step reaction: glutamate is first activated by ATP to form Glu-AMP and then transferred to the acceptor end of tRNA(Glu). This is Glutamate--tRNA ligase from Methanococcus maripaludis (strain DSM 14266 / JCM 13030 / NBRC 101832 / S2 / LL).